The primary structure comprises 207 residues: Large ribosomal subunit protein uL4 (207 aa).

The disordered stretch occupies residues Lys48–Gly70.

Belongs to the universal ribosomal protein uL4 family. As to quaternary structure, part of the 50S ribosomal subunit.

One of the primary rRNA binding proteins, this protein initially binds near the 5'-end of the 23S rRNA. It is important during the early stages of 50S assembly. It makes multiple contacts with different domains of the 23S rRNA in the assembled 50S subunit and ribosome. Functionally, forms part of the polypeptide exit tunnel. This Francisella tularensis subsp. mediasiatica (strain FSC147) protein is Large ribosomal subunit protein uL4.